Reading from the N-terminus, the 179-residue chain is Sec-independent protein translocase protein TatB (179 aa).

The helical transmembrane segment at 1 to 21 threads the bilayer; it reads MLDLGLSKMALIGVVALVVLG. Low complexity predominate over residues 101–115; sequence GAAGDAGSVGSPGSD. The disordered stretch occupies residues 101–134; it reads GAAGDAGSVGSPGSDTPAAPSWRGSSAALAPKRR.

The protein belongs to the TatB family. The Tat system comprises two distinct complexes: a TatABC complex, containing multiple copies of TatA, TatB and TatC subunits, and a separate TatA complex, containing only TatA subunits. Substrates initially bind to the TatABC complex, which probably triggers association of the separate TatA complex to form the active translocon.

The protein localises to the cell inner membrane. Functionally, part of the twin-arginine translocation (Tat) system that transports large folded proteins containing a characteristic twin-arginine motif in their signal peptide across membranes. Together with TatC, TatB is part of a receptor directly interacting with Tat signal peptides. TatB may form an oligomeric binding site that transiently accommodates folded Tat precursor proteins before their translocation. This is Sec-independent protein translocase protein TatB from Burkholderia orbicola (strain AU 1054).